A 354-amino-acid polypeptide reads, in one-letter code: Homeobox-leucine zipper protein HOX27 (354 aa).

Residues 98–175 form a disordered region; it reads SVAAGAPGME…DDEGASARKK (78 aa). Residues 148–157 are compositionally biased toward gly residues; it reads QGGGGGGGGE. Positions 171–230 form a DNA-binding region, homeobox; it reads SARKKLRLSKEQSAFLEESFKEHSTLNPKQKVALAKQLNLRPRQVEVWFQNRRARTKLKQ. The leucine-zipper stretch occupies residues 229 to 273; that stretch reads KQTEVDCEYLKRCCETLTEENRRLHKELAELRALKTARPFYMHLP. A disordered region spans residues 294–323; that stretch reads STSAPAAATSPAAAPTAAARTAVASPEPHR.

Belongs to the HD-ZIP homeobox family. Class II subfamily. Expressed in seedlings, roots, stems, leaf sheaths and blades and panicles.

The protein localises to the nucleus. In terms of biological role, probable transcription factor. This Oryza sativa subsp. indica (Rice) protein is Homeobox-leucine zipper protein HOX27 (HOX27).